A 244-amino-acid chain; its full sequence is 3-deoxy-manno-octulosonate cytidylyltransferase (244 aa).

It belongs to the KdsB family.

The protein localises to the cytoplasm. The catalysed reaction is 3-deoxy-alpha-D-manno-oct-2-ulosonate + CTP = CMP-3-deoxy-beta-D-manno-octulosonate + diphosphate. The protein operates within nucleotide-sugar biosynthesis; CMP-3-deoxy-D-manno-octulosonate biosynthesis; CMP-3-deoxy-D-manno-octulosonate from 3-deoxy-D-manno-octulosonate and CTP: step 1/1. It participates in bacterial outer membrane biogenesis; lipopolysaccharide biosynthesis. Functionally, activates KDO (a required 8-carbon sugar) for incorporation into bacterial lipopolysaccharide in Gram-negative bacteria. In Wolinella succinogenes (strain ATCC 29543 / DSM 1740 / CCUG 13145 / JCM 31913 / LMG 7466 / NCTC 11488 / FDC 602W) (Vibrio succinogenes), this protein is 3-deoxy-manno-octulosonate cytidylyltransferase.